The sequence spans 683 residues: WD repeat-containing protein 48 homolog (683 aa).

7 WD repeats span residues 27–82 (SNRS…PVQY), 88–130 (QHTD…FIDC), 133–167 (THKD…INAN), 176–215 (GCKD…KIMK), 218–257 (GHTD…CIAT), 260–299 (AHEE…KSQL), and 302–343 (KEEA…QLSI). The segment at 341-364 (LSIGGDEDGPSTSNANHSVSASSS) is disordered. Residues 351 to 364 (STSNANHSVSASSS) show a composition bias toward low complexity. A WD 8 repeat occupies 389 to 428 (PGAPAIKKHAMLSDKRHVLTRDSDGNVALYDVLAARKIKD).

It belongs to the WD repeat WDR48 family. As to quaternary structure, interacts with usp-46; the interaction increases the catalytic activity of usp-46 in the presence of wdr-20. Expressed in several head neurons and cells in the tail including the anal depressor cell.

Functionally, together with wdr-20, binds to and stimulates the activity of the deubiquitinating enzyme usp-46, leading to deubiquitination and stabilization of the glr-1 glutamate receptor. In Caenorhabditis elegans, this protein is WD repeat-containing protein 48 homolog (wdr-48).